The following is a 133-amino-acid chain: Small ribosomal subunit protein uS9 (133 aa).

It belongs to the universal ribosomal protein uS9 family.

In Ureaplasma urealyticum serovar 10 (strain ATCC 33699 / Western), this protein is Small ribosomal subunit protein uS9.